The primary structure comprises 367 residues: Mating-type protein ALPHA2 (367 aa).

Positions 273-338 (GADAIDSEKL…NKRRTGAKKR (66 aa)) form a DNA-binding region, homeobox; TALE-type.

This sequence belongs to the TALE/M-ATYP homeobox family. In terms of assembly, forms a heterodimer with A1.

It localises to the nucleus. Mating type proteins are sequence specific DNA-binding proteins that act as master switches in yeast differentiation by controlling gene expression in a cell type-specific fashion. Transcriptional corepressor that acts in conjunction with A1 to repress transcription of haploid-specific genes. In Yarrowia lipolytica (strain CLIB 122 / E 150) (Yeast), this protein is Mating-type protein ALPHA2 (MATB2).